A 196-amino-acid chain; its full sequence is Imidazole glycerol phosphate synthase subunit HisH (196 aa).

The Glutamine amidotransferase type-1 domain occupies 2 to 196 (KATLINYGVG…LRNFYSWVKR (195 aa)). Cys76 functions as the Nucleophile in the catalytic mechanism. Residues His175 and Glu177 contribute to the active site.

In terms of assembly, heterodimer of HisH and HisF.

It is found in the cytoplasm. The enzyme catalyses 5-[(5-phospho-1-deoxy-D-ribulos-1-ylimino)methylamino]-1-(5-phospho-beta-D-ribosyl)imidazole-4-carboxamide + L-glutamine = D-erythro-1-(imidazol-4-yl)glycerol 3-phosphate + 5-amino-1-(5-phospho-beta-D-ribosyl)imidazole-4-carboxamide + L-glutamate + H(+). The catalysed reaction is L-glutamine + H2O = L-glutamate + NH4(+). It participates in amino-acid biosynthesis; L-histidine biosynthesis; L-histidine from 5-phospho-alpha-D-ribose 1-diphosphate: step 5/9. Its function is as follows. IGPS catalyzes the conversion of PRFAR and glutamine to IGP, AICAR and glutamate. The HisH subunit catalyzes the hydrolysis of glutamine to glutamate and ammonia as part of the synthesis of IGP and AICAR. The resulting ammonia molecule is channeled to the active site of HisF. The polypeptide is Imidazole glycerol phosphate synthase subunit HisH (Sulfurisphaera tokodaii (strain DSM 16993 / JCM 10545 / NBRC 100140 / 7) (Sulfolobus tokodaii)).